The following is a 133-amino-acid chain: MHFDPVADIITKINNANRAKIVELQTEASKLKVAILNILLNEGYIRGYEIYDNKEKTKSILKIKLKFDENRVSSLNGIKQISKPGLRIYVSAEKLPKVLNGLGIAIVSTNEGLMTDKLARAKKIGGEVLAYVW.

The protein belongs to the universal ribosomal protein uS8 family. In terms of assembly, part of the 30S ribosomal subunit. Contacts proteins S5 and S12.

Its function is as follows. One of the primary rRNA binding proteins, it binds directly to 16S rRNA central domain where it helps coordinate assembly of the platform of the 30S subunit. In Mycoplasmoides gallisepticum (strain R(low / passage 15 / clone 2)) (Mycoplasma gallisepticum), this protein is Small ribosomal subunit protein uS8.